The sequence spans 274 residues: 2,3,4,5-tetrahydropyridine-2,6-dicarboxylate N-succinyltransferase (274 aa).

It belongs to the transferase hexapeptide repeat family.

The protein resides in the cytoplasm. The catalysed reaction is (S)-2,3,4,5-tetrahydrodipicolinate + succinyl-CoA + H2O = (S)-2-succinylamino-6-oxoheptanedioate + CoA. It functions in the pathway amino-acid biosynthesis; L-lysine biosynthesis via DAP pathway; LL-2,6-diaminopimelate from (S)-tetrahydrodipicolinate (succinylase route): step 1/3. The polypeptide is 2,3,4,5-tetrahydropyridine-2,6-dicarboxylate N-succinyltransferase (Shigella boydii serotype 18 (strain CDC 3083-94 / BS512)).